The following is a 187-amino-acid chain: Elongation factor P (187 aa).

It belongs to the elongation factor P family.

The protein localises to the cytoplasm. It participates in protein biosynthesis; polypeptide chain elongation. Functionally, involved in peptide bond synthesis. Stimulates efficient translation and peptide-bond synthesis on native or reconstituted 70S ribosomes in vitro. Probably functions indirectly by altering the affinity of the ribosome for aminoacyl-tRNA, thus increasing their reactivity as acceptors for peptidyl transferase. The chain is Elongation factor P from Rhizorhabdus wittichii (strain DSM 6014 / CCUG 31198 / JCM 15750 / NBRC 105917 / EY 4224 / RW1) (Sphingomonas wittichii).